A 171-amino-acid chain; its full sequence is 3-hydroxydecanoyl-[acyl-carrier-protein] dehydratase (171 aa).

His71 is a catalytic residue.

It belongs to the thioester dehydratase family. FabA subfamily. Homodimer.

The protein localises to the cytoplasm. The enzyme catalyses a (3R)-hydroxyacyl-[ACP] = a (2E)-enoyl-[ACP] + H2O. It carries out the reaction (3R)-hydroxydecanoyl-[ACP] = (2E)-decenoyl-[ACP] + H2O. It catalyses the reaction (2E)-decenoyl-[ACP] = (3Z)-decenoyl-[ACP]. It functions in the pathway lipid metabolism; fatty acid biosynthesis. Functionally, necessary for the introduction of cis unsaturation into fatty acids. Catalyzes the dehydration of (3R)-3-hydroxydecanoyl-ACP to E-(2)-decenoyl-ACP and then its isomerization to Z-(3)-decenoyl-ACP. Can catalyze the dehydratase reaction for beta-hydroxyacyl-ACPs with saturated chain lengths up to 16:0, being most active on intermediate chain length. In Rhizobium meliloti (strain 1021) (Ensifer meliloti), this protein is 3-hydroxydecanoyl-[acyl-carrier-protein] dehydratase.